Here is a 105-residue protein sequence, read N- to C-terminus: Cytochrome c-553-like (105 aa).

An N-terminal signal peptide occupies residues Met1–Ala29. Residues Cys45, Cys48, His49, and Met85 each coordinate heme c.

Post-translationally, binds 1 heme c group covalently per subunit.

In Synechocystis sp. (strain ATCC 27184 / PCC 6803 / Kazusa), this protein is Cytochrome c-553-like (cytM).